The primary structure comprises 205 residues: Holliday junction branch migration complex subunit RuvA (205 aa).

Residues 1–64 (MIGKLKGVVD…EDMIRLYGFR (64 aa)) form a domain I region. The interval 65–143 (SDAEREWFRL…AFAPVDPALV (79 aa)) is domain II. The segment at 144–152 (ALAGAVEEG) is flexible linker. The domain III stretch occupies residues 153 to 205 (AAPQPVADAVSALVNLGYPQVQAAAAIAAALKGAGEGAEAKVLIRLGLRELAR).

It belongs to the RuvA family. Homotetramer. Forms an RuvA(8)-RuvB(12)-Holliday junction (HJ) complex. HJ DNA is sandwiched between 2 RuvA tetramers; dsDNA enters through RuvA and exits via RuvB. An RuvB hexamer assembles on each DNA strand where it exits the tetramer. Each RuvB hexamer is contacted by two RuvA subunits (via domain III) on 2 adjacent RuvB subunits; this complex drives branch migration. In the full resolvosome a probable DNA-RuvA(4)-RuvB(12)-RuvC(2) complex forms which resolves the HJ.

The protein resides in the cytoplasm. In terms of biological role, the RuvA-RuvB-RuvC complex processes Holliday junction (HJ) DNA during genetic recombination and DNA repair, while the RuvA-RuvB complex plays an important role in the rescue of blocked DNA replication forks via replication fork reversal (RFR). RuvA specifically binds to HJ cruciform DNA, conferring on it an open structure. The RuvB hexamer acts as an ATP-dependent pump, pulling dsDNA into and through the RuvAB complex. HJ branch migration allows RuvC to scan DNA until it finds its consensus sequence, where it cleaves and resolves the cruciform DNA. This chain is Holliday junction branch migration complex subunit RuvA, found in Methylobacterium radiotolerans (strain ATCC 27329 / DSM 1819 / JCM 2831 / NBRC 15690 / NCIMB 10815 / 0-1).